Reading from the N-terminus, the 431-residue chain is Probable 3-hydroxy-3-methylglutaryl-coenzyme A reductase (431 aa).

Active-site charge relay system residues include Glu85 and Asp278. The active-site Proton donor is the His375.

This sequence belongs to the HMG-CoA reductase family.

It catalyses the reaction (R)-mevalonate + 2 NAD(+) + CoA = (3S)-3-hydroxy-3-methylglutaryl-CoA + 2 NADH + 2 H(+). It participates in metabolic intermediate metabolism; (R)-mevalonate degradation; (S)-3-hydroxy-3-methylglutaryl-CoA from (R)-mevalonate: step 1/1. In terms of biological role, converts HMG-CoA to mevalonate. The chain is Probable 3-hydroxy-3-methylglutaryl-coenzyme A reductase from Borreliella burgdorferi (strain ATCC 35210 / DSM 4680 / CIP 102532 / B31) (Borrelia burgdorferi).